The primary structure comprises 742 residues: MKIDSNGIVNPHSITNEIPSYDEKQAVDLNGNAFAPNGTFQKKDLISHKNDFERTMRHDVLHTNPKIEVRSETHIYEPNDSLFKENQDFPSNPTAHSPSSSSNDSVITATGVPDGILRDSPIVSALEPPSSNSSSSPQLQNLKHQLSSPQPSRAPIDRSSSNPVTSSQQPPNDRSTLSSSQKAKRPLKRSYSEKNSSNAEPSGSRSGDRGTNVSTSGSLLDGIPPDIGSASWAEAVKQKRVNMRRRREELDDECVLVGTRVSEGHENYVTAYNMLTGIRVGVSRCQAKMDRELTPADFTARHKFTFDITGNELTPSAKYDFKFKDYAPWVFRHLRQLFHLDAADYLVSLTSKYILSELDSPGKSGSFFYFSRDYRFIIKTIHHSEHKFLREILYDYYEHVKNNPNTLISQFYGLHRVKLPFGRKIHFVVMNNLFPPHRDIHQTFDLKGSTLGRELDENQPCQSPMCTMKDTNWIRRNMHLQFGPLKRQIFLTQVKADIDMLSSLGIMDYSLLVGIHDLSRGNRDKIRNSILSVYDPNVSQHRVPSINGNESHSNVHVIRQVVNSTGPVSLDQSCNLLPTDQFVERRNFMFYSDDGGFQATDENNEPGNFIFYIGIIDLLTKYSYVKRVEHLWKGINHSDSVISAVPPAEYASRFYKFVESSIKPTLLVLKPFPLKPQDGQRVNKQQSVNAGNVRTNNKHGSLNNNTAPSSRNAKSTSAHKSPKTEHRFPFPCRNVTTNTSSS.

Disordered stretches follow at residues Met-1–Tyr-21 and Leu-82–Gly-228. 2 stretches are compositionally biased toward low complexity: residues Pro-90–Ser-105 and Pro-129–Leu-142. 2 stretches are compositionally biased toward polar residues: residues Arg-158 to Gln-181 and Glu-193 to Ser-218. One can recognise a PIPK domain in the interval Gly-264–Ile-662. A disordered region spans residues Gln-677–Ser-742. Residues Gln-680–His-719 are compositionally biased toward polar residues.

In terms of assembly, interacts with opy1 (via domain PH 1); the interaction is direct but opy1 does not appear to regulate its3 localization or function. Post-translationally, phosphorylated by casein kinase I. Phosphorylation inactivates the enzyme.

The protein resides in the cell membrane. It carries out the reaction a 1,2-diacyl-sn-glycero-3-phospho-(1D-myo-inositol 4-phosphate) + ATP = a 1,2-diacyl-sn-glycero-3-phospho-(1D-myo-inositol-4,5-bisphosphate) + ADP + H(+). Its function is as follows. Catalyzes the phosphorylation of phosphatidylinositol 4-phosphate on the fifth hydroxyl of the myo-inositol ring, to form phosphatidylinositol 4,5-bisphosphate. Involved, together with the calcineurin ppb1, in cytokinesis. The polypeptide is Phosphatidylinositol 4-phosphate 5-kinase its3 (its3) (Schizosaccharomyces pombe (strain 972 / ATCC 24843) (Fission yeast)).